Here is a 309-residue protein sequence, read N- to C-terminus: Clotting factor G beta subunit (309 aa).

The N-terminal stretch at Met1–Arg31 is a signal peptide. Cystine bridges form between Cys38/Cys158, Cys74/Cys90, Cys205/Cys227, and Cys238/Cys268. The Peptidase S1 domain occupies Ile47 to Phe292. Catalysis depends on His89, which acts as the Charge relay system. The N-linked (GlcNAc...) asparagine glycan is linked to Asn100. Asp138 acts as the Charge relay system in catalysis. N-linked (GlcNAc...) asparagine glycosylation occurs at Asn206. The active-site Charge relay system is the Ser242.

This sequence belongs to the peptidase S1 family. As to quaternary structure, clotting factor G is a heterodimer composed of two non-covalently associated subunits, alpha and beta. Upon activation, converted to a two-chain active form linked by a disulfide bond. Forms a covalent heterodimer with intracellular coagulation inhibitor 3/LICI-3. In terms of tissue distribution, expressed in the hemocytes (at protein level).

The catalysed reaction is Selective cleavage of 98-Arg-|-Ile-99 bond in Limulus proclotting enzyme to form active clotting enzyme.. With respect to regulation, binding to (1-&gt;3)-beta-D-glucan to alpha subunit, induces autocatalysis and activation of beta subunit. Inhibited by intracellular coagulation inhibitor 3/LICI-3 and to a lesser extend by intracellular coagulation inhibitor 2/LICI-2. In terms of biological role, component of the heterodimer clotting factor G which may play a role in defense mechanisms against fungi. Initiates a (1-&gt;3)-beta-glucan-sensing clotting pathway whereby the alpha subunit binds to glucans containing (1-&gt;3)-beta linkages, which are components of the fungal cell wall, and the beta subunit catalyzes the activation of proclotting enzyme. This Tachypleus tridentatus (Japanese horseshoe crab) protein is Clotting factor G beta subunit.